Consider the following 137-residue polypeptide: Basic phospholipase A2 homolog 4a (137 aa).

A signal peptide spans 1–16 (MRTLWIVTVLLVGVEG). 7 disulfide bridges follow: Cys42/Cys131, Cys44/Cys60, Cys59/Cys111, Cys65/Cys137, Cys66/Cys104, Cys73/Cys97, and Cys91/Cys102. Positions 121-133 (KKYKIYPKFFCKK) are important for membrane-damaging activities in eukaryotes and bacteria; heparin-binding.

Belongs to the phospholipase A2 family. Group II subfamily. K49 sub-subfamily. As to quaternary structure, homodimer; non-covalently linked. In terms of tissue distribution, expressed by the venom gland.

The protein localises to the secreted. Functionally, snake venom phospholipase A2 homolog that lacks enzymatic activity. Is myotoxic and displays edema-inducing activities. A model of myotoxic mechanism has been proposed: an apo Lys49-PLA2 is activated by the entrance of a hydrophobic molecule (e.g. fatty acid) at the hydrophobic channel of the protein leading to a reorientation of a monomer. This reorientation causes a transition between 'inactive' to 'active' states, causing alignment of C-terminal and membrane-docking sites (MDoS) side-by-side and putting the membrane-disruption sites (MDiS) in the same plane, exposed to solvent and in a symmetric position for both monomers. The MDoS region stabilizes the toxin on membrane by the interaction of charged residues with phospholipid head groups. Subsequently, the MDiS region destabilizes the membrane with penetration of hydrophobic residues. This insertion causes a disorganization of the membrane, allowing an uncontrolled influx of ions (i.e. calcium and sodium), and eventually triggering irreversible intracellular alterations and cell death. The sequence is that of Basic phospholipase A2 homolog 4a from Bothrops asper (Terciopelo).